The following is a 376-amino-acid chain: Ribonucleoside-diphosphate reductase 1 subunit beta (376 aa).

Fe cation contacts are provided by Asp85, Glu116, and His119. The active site involves Tyr123. Fe cation-binding residues include Glu205, Glu239, and His242.

Belongs to the ribonucleoside diphosphate reductase small chain family. As to quaternary structure, tetramer of two alpha (R1) and two beta (R2) subunits. The B1 protein is a dimer of alpha subunits. A radical transfer pathway occurs between Tyr-123 of R2 and R1. The cofactor is Fe cation.

The catalysed reaction is a 2'-deoxyribonucleoside 5'-diphosphate + [thioredoxin]-disulfide + H2O = a ribonucleoside 5'-diphosphate + [thioredoxin]-dithiol. Its function is as follows. Provides the precursors necessary for DNA synthesis. Catalyzes the biosynthesis of deoxyribonucleotides from the corresponding ribonucleotides. R2 contains the tyrosyl radical required for catalysis. In Salmonella typhimurium (strain LT2 / SGSC1412 / ATCC 700720), this protein is Ribonucleoside-diphosphate reductase 1 subunit beta (nrdB).